A 256-amino-acid chain; its full sequence is Protein FixA (256 aa).

It belongs to the ETF beta-subunit/FixA family. In terms of assembly, heterodimer of FixA and FixB.

It participates in amine and polyamine metabolism; carnitine metabolism. Its function is as follows. Required for anaerobic carnitine reduction. May bring reductant to CaiA. In Escherichia coli O6:H1 (strain CFT073 / ATCC 700928 / UPEC), this protein is Protein FixA.